A 207-amino-acid chain; its full sequence is Cytochrome c biogenesis ATP-binding export protein CcmA (207 aa).

Residues 2 to 204 form the ABC transporter domain; that stretch reads LEVKNLTAIR…NPKLRKIRLG (203 aa). Residue 34-41 participates in ATP binding; sequence GRNGTGKT.

It belongs to the ABC transporter superfamily. CcmA exporter (TC 3.A.1.107) family. In terms of assembly, the complex is composed of two ATP-binding proteins (CcmA) and two transmembrane proteins (CcmB).

Its subcellular location is the cell inner membrane. It catalyses the reaction heme b(in) + ATP + H2O = heme b(out) + ADP + phosphate + H(+). Its function is as follows. Part of the ABC transporter complex CcmAB involved in the biogenesis of c-type cytochromes; once thought to export heme, this seems not to be the case, but its exact role is uncertain. Responsible for energy coupling to the transport system. This is Cytochrome c biogenesis ATP-binding export protein CcmA from Vibrio cholerae serotype O1 (strain ATCC 39315 / El Tor Inaba N16961).